The following is a 513-amino-acid chain: ATP synthase subunit alpha 2 (513 aa).

169-176 (GDRQTGKT) is a binding site for ATP.

The protein belongs to the ATPase alpha/beta chains family. In terms of assembly, F-type ATPases have 2 components, CF(1) - the catalytic core - and CF(0) - the membrane proton channel. CF(1) has five subunits: alpha(3), beta(3), gamma(1), delta(1), epsilon(1). CF(0) has three main subunits: a(1), b(2) and c(9-12). The alpha and beta chains form an alternating ring which encloses part of the gamma chain. CF(1) is attached to CF(0) by a central stalk formed by the gamma and epsilon chains, while a peripheral stalk is formed by the delta and b chains.

Its subcellular location is the cell inner membrane. The catalysed reaction is ATP + H2O + 4 H(+)(in) = ADP + phosphate + 5 H(+)(out). Produces ATP from ADP in the presence of a proton gradient across the membrane. The alpha chain is a regulatory subunit. The chain is ATP synthase subunit alpha 2 from Shewanella frigidimarina (strain NCIMB 400).